A 539-amino-acid chain; its full sequence is Tyrosinase (539 aa).

The Cu cation site is built by H63, H84, H93, H290, H294, and H333. Positions 82 to 84 form a cross-link, 2'-(S-cysteinyl)-histidine (Cys-His); sequence CHH.

Belongs to the tyrosinase family. In terms of assembly, homotetramer. Requires Cu(2+) as cofactor. Post-translationally, the N-terminus is blocked.

It catalyses the reaction 2 L-dopa + O2 = 2 L-dopaquinone + 2 H2O. It carries out the reaction L-tyrosine + O2 = L-dopaquinone + H2O. With respect to regulation, activated by acidifying treatment at pH 3.0. This is a copper-containing oxidase that functions in the formation of pigments such as melanins and other polyphenolic compounds. This is Tyrosinase (melO) from Aspergillus oryzae (strain ATCC 42149 / RIB 40) (Yellow koji mold).